The sequence spans 444 residues: MSANHMTPGEIVSELDKFIIGQNRAKRAVAVALRNRWRRQQVAEPLRHEIHPKNILMIGPTGVGKTEIARRLAKLANAPFIKIEATKFTEVGYVGRDVDTIIRDLTEYSIKQTRELEMRRVRSHAEDAAEDRILDALVPPPRGASGEPERGEDNSARQTFRKRLREGKIDDLEIEIEIAQPMPQMDVMTPPGMEEMAEQLRGMFAGLARDKKKSKKIKVREAFKLIVEEEAAKRVNEDDLRAAAITNVEQNGIVFLDEIDKIAARQETGGADVSRQGVQRDLLPLVEGTTVNTRYGMVRTDHILFIASGAFHLARPSDLIPELQGRFPIRVELDSLSAEDFVNILSETDASLIKQYTALLGTEDVKLEFTDDGIRRLAELAFSVNERTENIGARRLYTVMEKLLEELSFDASANSGEVITIDAAYVDLQLAETAGSQDLARYVL.

Residues I20 and 62 to 67 (GVGKTE) contribute to the ATP site. The segment at 130-158 (EDRILDALVPPPRGASGEPERGEDNSARQ) is disordered. ATP-binding residues include D257, E322, and R394.

This sequence belongs to the ClpX chaperone family. HslU subfamily. As to quaternary structure, a double ring-shaped homohexamer of HslV is capped on each side by a ring-shaped HslU homohexamer. The assembly of the HslU/HslV complex is dependent on binding of ATP.

The protein localises to the cytoplasm. Functionally, ATPase subunit of a proteasome-like degradation complex; this subunit has chaperone activity. The binding of ATP and its subsequent hydrolysis by HslU are essential for unfolding of protein substrates subsequently hydrolyzed by HslV. HslU recognizes the N-terminal part of its protein substrates and unfolds these before they are guided to HslV for hydrolysis. The polypeptide is ATP-dependent protease ATPase subunit HslU (Bordetella bronchiseptica (strain ATCC BAA-588 / NCTC 13252 / RB50) (Alcaligenes bronchisepticus)).